The following is a 214-amino-acid chain: MAGKGLFITLEGGEGAGKSTQARLLAEALRAEGHKVLLTREPGGTPGAEEIRNLLLFGKVDLSWRAEILMHMAARSDHLDNAILPALERGEIVVCDRFHDSTLAYQGYGIGQGAPEVLAFLNGARKLVDFEPDLTLMLELPRPQALARLKARGGQTDRYEAQAEAFHERVLAGFDAIASADPVRVKRVDAGQTPEAVSAALLQAVHESLTVQGV.

Gly-12–Ser-19 lines the ATP pocket.

Belongs to the thymidylate kinase family.

It catalyses the reaction dTMP + ATP = dTDP + ADP. Its function is as follows. Phosphorylation of dTMP to form dTDP in both de novo and salvage pathways of dTTP synthesis. In Gluconobacter oxydans (strain 621H) (Gluconobacter suboxydans), this protein is Thymidylate kinase.